The chain runs to 174 residues: RNA pyrophosphohydrolase (174 aa).

The region spanning 6–149 (GYRPNVGIIL…KRDVYLGALK (144 aa)) is the Nudix hydrolase domain. A Nudix box motif is present at residues 38 to 59 (GGIKPGESPETAMYRELYEEVG).

It belongs to the Nudix hydrolase family. RppH subfamily. A divalent metal cation is required as a cofactor.

Accelerates the degradation of transcripts by removing pyrophosphate from the 5'-end of triphosphorylated RNA, leading to a more labile monophosphorylated state that can stimulate subsequent ribonuclease cleavage. This Neisseria meningitidis serogroup A / serotype 4A (strain DSM 15465 / Z2491) protein is RNA pyrophosphohydrolase.